The sequence spans 314 residues: Mitochondrial 2-oxoglutarate/malate carrier protein (314 aa).

Ala2 carries the post-translational modification N-acetylalanine. The residue at position 6 (Ser6) is a Phosphoserine. 3 Solcar repeats span residues 23 to 108, 117 to 208, and 217 to 306; these read VKFL…LFER, PGFL…SKQF, and DNIL…MNKA. A helical transmembrane segment spans residues 24-42; the sequence is KFLFGGLAGMGATVFVQPL. The residue at position 57 (Lys57) is an N6-succinyllysine. The residue at position 73 (Lys73) is an N6-acetyllysine. A helical transmembrane segment spans residues 83–101; sequence GLSAGLLRQATYTTTRLGI. The residue at position 102 (Tyr102) is a Phosphotyrosine. Helical transmembrane passes span 119–140, 183–202, and 222–240; these read FLLK…GTPA, GCIP…LASY, and HFCA…SMPV. Lys256 is modified (N6-acetyllysine). The chain crosses the membrane as a helical span at residues 281–300; that stretch reads GFTPYYARLGPHTVLTFIFL.

It belongs to the mitochondrial carrier (TC 2.A.29) family. As to quaternary structure, interacts with SMIM26. As to expression, most highly expressed in the heart.

Its subcellular location is the mitochondrion inner membrane. The enzyme catalyses (S)-malate(in) + 2-oxoglutarate(out) = (S)-malate(out) + 2-oxoglutarate(in). It catalyses the reaction malonate(in) + 2-oxoglutarate(out) = malonate(out) + 2-oxoglutarate(in). The catalysed reaction is succinate(in) + 2-oxoglutarate(out) = succinate(out) + 2-oxoglutarate(in). It carries out the reaction maleate(in) + 2-oxoglutarate(out) = maleate(out) + 2-oxoglutarate(in). The enzyme catalyses oxaloacetate(in) + 2-oxoglutarate(out) = oxaloacetate(out) + 2-oxoglutarate(in). In terms of biological role, catalyzes the transport of 2-oxoglutarate (alpha-oxoglutarate) across the inner mitochondrial membrane in an electroneutral exchange for malate. Can also exchange 2-oxoglutarate for other dicarboxylic acids such as malonate, succinate, maleate and oxaloacetate, although with lower affinity. Contributes to several metabolic processes, including the malate-aspartate shuttle, the oxoglutarate/isocitrate shuttle, in gluconeogenesis from lactate, and in nitrogen metabolism. Maintains mitochondrial fusion and fission events, and the organization and morphology of cristae. Involved in the regulation of apoptosis. Helps protect from cytotoxic-induced apoptosis by modulating glutathione levels in mitochondria. The chain is Mitochondrial 2-oxoglutarate/malate carrier protein (SLC25A11) from Homo sapiens (Human).